The chain runs to 569 residues: Urease subunit alpha (569 aa).

The Urease domain maps to 131-569 (GAIDSHIHFI…LPLAQRYLLL (439 aa)). Ni(2+)-binding residues include His136, His138, and Lys219. An N6-carboxylysine modification is found at Lys219. Residue His221 coordinates substrate. Positions 248 and 274 each coordinate Ni(2+). His322 serves as the catalytic Proton donor. Asp362 is a Ni(2+) binding site.

Belongs to the metallo-dependent hydrolases superfamily. Urease alpha subunit family. As to quaternary structure, heterotrimer of UreA (gamma), UreB (beta) and UreC (alpha) subunits. Three heterotrimers associate to form the active enzyme. Ni cation is required as a cofactor. Carboxylation allows a single lysine to coordinate two nickel ions.

It is found in the cytoplasm. The enzyme catalyses urea + 2 H2O + H(+) = hydrogencarbonate + 2 NH4(+). It participates in nitrogen metabolism; urea degradation; CO(2) and NH(3) from urea (urease route): step 1/1. The polypeptide is Urease subunit alpha (Prochlorococcus marinus (strain NATL2A)).